The following is a 311-amino-acid chain: tRNA pseudouridine synthase B (311 aa).

Histidine 43 is a substrate binding site. Residue aspartate 48 is the Nucleophile of the active site. Substrate is bound by residues tyrosine 76, tyrosine 179, and leucine 200.

It belongs to the pseudouridine synthase TruB family. Type 1 subfamily.

The catalysed reaction is uridine(55) in tRNA = pseudouridine(55) in tRNA. In terms of biological role, responsible for synthesis of pseudouridine from uracil-55 in the psi GC loop of transfer RNAs. The chain is tRNA pseudouridine synthase B from Sodalis glossinidius (strain morsitans).